A 334-amino-acid chain; its full sequence is Phospho-N-acetylmuramoyl-pentapeptide-transferase (334 aa).

9 consecutive transmembrane segments (helical) span residues 5 to 25, 52 to 72, 81 to 101, 116 to 136, 148 to 168, 181 to 200, 230 to 250, 256 to 276, and 309 to 329; these read VVWLAAGISFLVTLVLGPVTI, PTMGGIMFLIGIAVAGAVLLV, GLVVLAVTLGYGLIGFLDDFI, KILGQLVFATVLAVVAVFKLG, GISFDLGWWPFFFLTLFVLLG, GLASGATVFTATAFAILALV, VFMGDTGSLALGGALGAGAVV, LLVVIGGLYVLETLSVIIQVI, and FWLLSFLFSLVGLLGAQDFWL.

It belongs to the glycosyltransferase 4 family. MraY subfamily. Mg(2+) is required as a cofactor.

It is found in the cell membrane. The enzyme catalyses UDP-N-acetyl-alpha-D-muramoyl-L-alanyl-gamma-D-glutamyl-meso-2,6-diaminopimeloyl-D-alanyl-D-alanine + di-trans,octa-cis-undecaprenyl phosphate = di-trans,octa-cis-undecaprenyl diphospho-N-acetyl-alpha-D-muramoyl-L-alanyl-D-glutamyl-meso-2,6-diaminopimeloyl-D-alanyl-D-alanine + UMP. The protein operates within cell wall biogenesis; peptidoglycan biosynthesis. Functionally, catalyzes the initial step of the lipid cycle reactions in the biosynthesis of the cell wall peptidoglycan: transfers peptidoglycan precursor phospho-MurNAc-pentapeptide from UDP-MurNAc-pentapeptide onto the lipid carrier undecaprenyl phosphate, yielding undecaprenyl-pyrophosphoryl-MurNAc-pentapeptide, known as lipid I. The chain is Phospho-N-acetylmuramoyl-pentapeptide-transferase from Desulforamulus reducens (strain ATCC BAA-1160 / DSM 100696 / MI-1) (Desulfotomaculum reducens).